Reading from the N-terminus, the 195-residue chain is Cysteine/O-acetylserine efflux protein (195 aa).

Topologically, residues 1 to 7 are periplasmic; sequence MTPTLLS. The helical transmembrane segment at 8–28 threads the bilayer; it reads AFWTYTLITAMTPGPNNILAL. Topologically, residues 29 to 46 are cytoplasmic; that stretch reads SSATSHGFRQSTRVLAGM. The chain crosses the membrane as a helical span at residues 47 to 67; the sequence is SLGFLIVMLLCAGISFSLAVI. Residues 68-69 lie on the Periplasmic side of the membrane; it reads DP. The chain crosses the membrane as a helical span at residues 70–90; the sequence is AAVHLLSWAGAAYIVWLAWKI. At 91 to 104 the chain is on the cytoplasmic side; it reads ATSPTKEDGLQAKP. Residues 105-125 form a helical membrane-spanning segment; that stretch reads ISFWASFALQFVNVKIILYGV. Residues 126-141 are Periplasmic-facing; that stretch reads TALSTFVLPQTQALSW. The helical transmembrane segment at 142–162 threads the bilayer; that stretch reads VVGVSVLLAMIGTFGNVCWAL. The Cytoplasmic portion of the chain corresponds to 163–176; that stretch reads AGHLFQRLFRQYGR. Residues 177–194 form a helical membrane-spanning segment; that stretch reads QLNIVLALLLIYCAVRIF. Residue tyrosine 195 is a topological domain, periplasmic.

It belongs to the Rht family.

The protein resides in the cell inner membrane. It carries out the reaction O-acetyl-L-serine(in) = O-acetyl-L-serine(out). The catalysed reaction is L-cysteine(in) = L-cysteine(out). Exporter of O-acetylserine (OAS) and cysteine. This chain is Cysteine/O-acetylserine efflux protein (eamB), found in Escherichia coli O139:H28 (strain E24377A / ETEC).